The sequence spans 258 residues: Intron-associated endonuclease 2 (258 aa).

In terms of domain architecture, GIY-YIG spans 14–96; the sequence is SVAFTYMVRF…RKYFNNEFIL (83 aa).

This endonuclease is specific to the nrdD gene splice junction and is involved in intron homing. The sequence is that of Intron-associated endonuclease 2 (ITEVIIR) from Escherichia coli (Bacteriophage T4).